Consider the following 232-residue polypeptide: Protein lin-7 homolog A (232 aa).

Residues 14–28 (MATLTVVQPLTLDRD) carry the Kinase interacting site motif. The 56-residue stretch at 25–80 (LDRDVARAIELLEKLQESGEVPVHKLQSLKKVLQSEFCTAIREVYQYMHETITVNG) folds into the L27 domain. The 83-residue stretch at 108–190 (VVELPKTDEG…SVKLVVRYTP (83 aa)) folds into the PDZ domain.

This sequence belongs to the lin-7 family. In terms of assembly, forms a complex with CASK and CASKIN1. Component of the brain-specific heterotrimeric complex (LIN-10-LIN-2-LIN-7 complex) composed of at least APBA1, CASK, and LIN7, which associates with the motor protein KIF17 to transport vesicles along microtubules. Can also interact with other modular proteins containing protein-protein interaction domains like PALS1, PALS2, MPP7, DLG1, DLG2 and DLG3 through its L27 domain. Interacts with DLG4 and GRIN2B as well as CDH1 and CTNNB1, the channels KCNJ12/Kir2.2, KCNJ4/Kir2.3 and probably KCNJ2/Kir2.1 and SLC6A12/BGT-1 via its PDZ domain. The association of LIN7A with cadherin and beta-catenin is calcium-dependent, occurs at synaptic junctions and requires the actin cytoskeleton. Interacts with EGFR, ERBB2, ERBB3 and ERBB4 with both PDZ and KID domains. Associates with KIF17 via APBA1. Interacts with HTR4. Forms a tripartite complex composed of DLG1, MPP7 and LIN7 (LIN7A or LIN7C). Interacts with MARCHF11. Ubiquitously expressed in brain and detected in lung, liver and testis (at protein level). Expression was detected only in brain.

The protein resides in the cell membrane. The protein localises to the basolateral cell membrane. It localises to the cell junction. It is found in the postsynaptic density membrane. Its subcellular location is the tight junction. Functionally, plays a role in establishing and maintaining the asymmetric distribution of channels and receptors at the plasma membrane of polarized cells. Forms membrane-associated multiprotein complexes that may regulate delivery and recycling of proteins to the correct membrane domains. The tripartite complex composed of LIN7 (LIN7A, LIN7B or LIN7C), CASK and APBA1 associates with the motor protein KIF17 to transport vesicles containing N-methyl-D-aspartate (NMDA) receptor subunit NR2B along microtubules. This complex may have the potential to couple synaptic vesicle exocytosis to cell adhesion in brain. Ensures the proper localization of GRIN2B (subunit 2B of the NMDA receptor) to neuronal postsynaptic density and may function in localizing synaptic vesicles at synapses where it is recruited by beta-catenin and cadherin. Required to localize Kir2 channels, GABA transporter (SLC6A12) and EGFR/ERBB1, ERBB2, ERBB3 and ERBB4 to the basolateral membrane of epithelial cells. This is Protein lin-7 homolog A (Lin7a) from Rattus norvegicus (Rat).